A 58-amino-acid chain; its full sequence is Small integral membrane protein 11 (58 aa).

The helical transmembrane segment at 10 to 32 (PLLLYILAAKTLILCLTFAGVKM) threads the bilayer. Residues 29–58 (GVKMYQRKRLEAKQQKLEAERKKQSEKKDN) are a coiled coil.

In terms of tissue distribution, expressed in heart, spleen, liver, stomach, muscle, lung, testis, skin, PBL and bone marrow.

It is found in the membrane. This Homo sapiens (Human) protein is Small integral membrane protein 11.